The sequence spans 322 residues: Ribonucleoside-diphosphate reductase small subunit (322 aa).

Asp70, Glu101, and His104 together coordinate Fe cation. The active site involves Tyr108. Residues Glu163, Glu197, and His200 each contribute to the Fe cation site.

The protein belongs to the ribonucleoside diphosphate reductase small chain family. As to quaternary structure, heterodimer of a large and a small subunit. It depends on Fe cation as a cofactor.

It catalyses the reaction a 2'-deoxyribonucleoside 5'-diphosphate + [thioredoxin]-disulfide + H2O = a ribonucleoside 5'-diphosphate + [thioredoxin]-dithiol. In terms of biological role, provides the precursors necessary for DNA synthesis. Catalyzes the biosynthesis of deoxyribonucleotides from the corresponding ribonucleotides. In Plasmodium falciparum (isolate FCR-3 / Gambia), this protein is Ribonucleoside-diphosphate reductase small subunit (RNR2).